We begin with the raw amino-acid sequence, 131 residues long: Large ribosomal subunit protein bL17 (131 aa).

Belongs to the bacterial ribosomal protein bL17 family. In terms of assembly, part of the 50S ribosomal subunit. Contacts protein L32.

In Cupriavidus metallidurans (strain ATCC 43123 / DSM 2839 / NBRC 102507 / CH34) (Ralstonia metallidurans), this protein is Large ribosomal subunit protein bL17.